Reading from the N-terminus, the 136-residue chain is Histone H3.3 (136 aa).

A disordered region spans residues 1–42 (MARTKQTARKSTGGKAPRKQLASKAARKSAPVSGGVKKPHRY). Position 5 is an N6,N6,N6-trimethyllysine; alternate (Lys-5). Lys-5 is modified (N6,N6-dimethyllysine; alternate). N6-methyllysine; alternate is present on residues Lys-5 and Lys-10. Lys-10 carries the post-translational modification N6-acetyllysine; alternate. A Phosphoserine modification is found at Ser-11. The residue at position 15 (Lys-15) is an N6,N6-dimethyllysine; alternate. An N6-acetyllysine; alternate mark is found at Lys-15, Lys-19, Lys-24, Lys-28, and Lys-37. 4 positions are modified to N6-methyllysine; alternate: Lys-19, Lys-24, Lys-28, and Lys-37. Lys-28 and Lys-37 each carry N6,N6,N6-trimethyllysine; alternate. N6,N6-dimethyllysine; alternate occurs at positions 28 and 37. 2 positions are modified to N6-acetyllysine: Lys-57 and Lys-65. At Lys-80 the chain carries N6,N6,N6-trimethyllysine; alternate. The residue at position 80 (Lys-80) is an N6,N6-dimethyllysine; alternate. At Lys-80 the chain carries N6-methyllysine; alternate.

This sequence belongs to the histone H3 family. In terms of assembly, the nucleosome is a histone octamer containing two molecules each of H2A, H2B, H3 and H4 assembled in one H3-H4 heterotetramer and two H2A-H2B heterodimers. The octamer wraps approximately 147 bp of DNA. Phosphorylated by IPL1 to form H3S10ph. H3S10ph promotes subsequent H3K14ac formation by GCN5 and is required for transcriptional activation through TBP recruitment to the promoters. In terms of processing, mono-, di- and trimethylated by the COMPASS complex to form H3K4me1/2/3. H3K4me activates gene expression by regulating transcription elongation and plays a role in telomere length maintenance. H3K4me enrichment correlates with transcription levels, and occurs in a 5' to 3' gradient with H3K4me3 enrichment at the 5'-end of genes, shifting to H3K4me2 and then H3K4me1. Methylated by SET2 to form H3K36me. H3K36me represses gene expression. Methylated by DOT1 to form H3K79me. H3K79me is required for association of SIR proteins with telomeric regions and for telomeric silencing. The COMPASS-mediated formation of H3K4me2/3 and the DOT1-mediated formation of H3K79me require H2BK123ub1. Post-translationally, acetylation of histone H3 leads to transcriptional activation. H3K14ac formation by GCN5 is promoted by H3S10ph. H3K14ac can also be formed by ESA1. H3K56ac formation occurs predominantly in newly synthesized H3 molecules during G1, S and G2/M of the cell cycle and may be involved in DNA repair.

It is found in the nucleus. The protein localises to the chromosome. In terms of biological role, core component of nucleosome. Nucleosomes wrap and compact DNA into chromatin, limiting DNA accessibility to the cellular machineries which require DNA as a template. Histones thereby play a central role in transcription regulation, DNA repair, DNA replication and chromosomal stability. DNA accessibility is regulated via a complex set of post-translational modifications of histones, also called histone code, and nucleosome remodeling. In Debaryomyces hansenii (strain ATCC 36239 / CBS 767 / BCRC 21394 / JCM 1990 / NBRC 0083 / IGC 2968) (Yeast), this protein is Histone H3.3 (HHT3).